Here is a 393-residue protein sequence, read N- to C-terminus: Acetate kinase (393 aa).

Asparagine 6 provides a ligand contact to Mg(2+). Lysine 13 contacts ATP. Substrate is bound at residue arginine 87. Aspartate 143 functions as the Proton donor/acceptor in the catalytic mechanism. ATP is bound by residues 203 to 207, 278 to 280, and 326 to 330; these read HLGNG, DMR, and GIGEN. Glutamate 380 is a binding site for Mg(2+).

It belongs to the acetokinase family. As to quaternary structure, homodimer. Mg(2+) serves as cofactor. It depends on Mn(2+) as a cofactor.

Its subcellular location is the cytoplasm. The catalysed reaction is acetate + ATP = acetyl phosphate + ADP. It functions in the pathway metabolic intermediate biosynthesis; acetyl-CoA biosynthesis; acetyl-CoA from acetate: step 1/2. In terms of biological role, catalyzes the formation of acetyl phosphate from acetate and ATP. Can also catalyze the reverse reaction. This Mycoplasma mycoides subsp. mycoides SC (strain CCUG 32753 / NCTC 10114 / PG1) protein is Acetate kinase.